Here is a 414-residue protein sequence, read N- to C-terminus: tRNA dimethylallyltransferase (414 aa).

Position 33 to 40 (33 to 40) interacts with ATP; the sequence is APTASGKT. Substrate is bound at residue 35 to 40; sequence TASGKT. 3 interaction with substrate tRNA regions span residues 58–61, 182–186, and 266–271; these read DSAL, QRITR, and RCVGYR.

It belongs to the IPP transferase family. Monomer. It depends on Mg(2+) as a cofactor.

It carries out the reaction adenosine(37) in tRNA + dimethylallyl diphosphate = N(6)-dimethylallyladenosine(37) in tRNA + diphosphate. In terms of biological role, catalyzes the transfer of a dimethylallyl group onto the adenine at position 37 in tRNAs that read codons beginning with uridine, leading to the formation of N6-(dimethylallyl)adenosine (i(6)A). In Psychrobacter arcticus (strain DSM 17307 / VKM B-2377 / 273-4), this protein is tRNA dimethylallyltransferase.